The primary structure comprises 369 residues: MLVRNICKFTQVMGRFRVVVNPRDYCHLAPLKRSRYHQRSEFGCRPLCSNAAGYEVSWAAPPASGSSGGMFWAFSAAFTLNLFGGADEKEETPEEKLIKTIKRSILCIQREQYDKAEQMLHLALRMAQDIQSKDGITYVFDLMANLAMEREQFKKAEKIFTDVMKRLFAEGHTEESPKILHISSKIAHMSQLQGDLEKSFQGFTWTLQQLAKLLEKMPDDKDILELYGLTKNWFGQLLMKQGKYLEAKNLFKEAFDTLINVYGAVNDASVTILNNISVAYVNLEKYAEARETLLEAMELTKELKDATQEGILQANLGLVYLREGLMSQAENACRLAWKLGKQHQNPDAVEQAEYCLNEIKTTLNGEKRQ.

5 TPR repeats span residues 97–130 (LIKTIKRSILCIQREQYDKAEQMLHLALRMAQDI), 137–170 (TYVFDLMANLAMEREQFKKAEKIFTDVMKRLFAE), 228–261 (GLTKNWFGQLLMKQGKYLEAKNLFKEAFDTLINV), 270–303 (VTILNNISVAYVNLEKYAEARETLLEAMELTKEL), and 310–343 (GILQANLGLVYLREGLMSQAENACRLAWKLGKQH).

Belongs to the TTC19 family.

The protein localises to the mitochondrion. Required for mitochondrial complex III formation. This chain is Tetratricopeptide repeat protein 19 homolog, mitochondrial (Ttc19), found in Drosophila melanogaster (Fruit fly).